A 544-amino-acid polypeptide reads, in one-letter code: Glucans biosynthesis protein G (544 aa).

The first 34 residues, 1 to 34 (MVSLLRCQSSKPYSSLICSLALGVAFALSGTAYA), serve as a signal peptide directing secretion.

It belongs to the OpgD/OpgG family.

It is found in the periplasm. It functions in the pathway glycan metabolism; osmoregulated periplasmic glucan (OPG) biosynthesis. Functionally, involved in the biosynthesis of osmoregulated periplasmic glucans (OPGs). This chain is Glucans biosynthesis protein G, found in Shewanella putrefaciens (strain CN-32 / ATCC BAA-453).